The primary structure comprises 307 residues: MNNDTSKKLGTLVSDDGPVNVYVWDMDETLILLRSLLNGTYAESFNGSKDVKRGVEIGRMWEKHILKICDDFFFYEQVEECNEPFLDSLRQYDDGKDLSRYEFKQDDFSTPTDDLNKRKLAYRHRAVAERYEKGLCPFIDSESMSGLDELYNVTDEYTDRWLSSARAFLEQCSCVEESSDGTSAIEQSSQDIHILVTSGALIPSLVKCLLFRLDTFLRHENVYSSIDVGKLQCFKWIKERFNHPKFRFCAIGDGWEECAAAQALQWPFVKIDLQPDSSHRFPGLTPKTVSYYFAAVYGNSDADSSKE.

A necessary for optimum phosphatase activity region spans residues 1–15 (MNNDTSKKLGTLVSD). The Nucleophile role is filled by D25. Mg(2+) contacts are provided by D25, D27, and D253. Residue D27 is the Proton donor of the active site.

This sequence belongs to the HAD-like hydrolase superfamily. EYA family. Mg(2+) is required as a cofactor.

It carries out the reaction O-phospho-L-tyrosyl-[protein] + H2O = L-tyrosyl-[protein] + phosphate. Inhibited by EDTA. Functionally, possesses phosphatase activity toward para-nitrophenyl phosphate (pNPP) in vitro. Possesses phosphatase activity toward several phosphotyrosine-containing peptides in vitro, with low peptide substrate specificity. This Arabidopsis thaliana (Mouse-ear cress) protein is Protein phosphatase EYA.